The following is a 174-amino-acid chain: Shikimate kinase (174 aa).

ATP is bound at residue 15–20; sequence GTGKST. Residue serine 19 coordinates Mg(2+). Residues aspartate 37, arginine 61, and glycine 82 each coordinate substrate. ATP is bound at residue arginine 120. Arginine 138 serves as a coordination point for substrate.

Belongs to the shikimate kinase family. As to quaternary structure, monomer. Mg(2+) serves as cofactor.

It is found in the cytoplasm. The enzyme catalyses shikimate + ATP = 3-phosphoshikimate + ADP + H(+). The protein operates within metabolic intermediate biosynthesis; chorismate biosynthesis; chorismate from D-erythrose 4-phosphate and phosphoenolpyruvate: step 5/7. Its function is as follows. Catalyzes the specific phosphorylation of the 3-hydroxyl group of shikimic acid using ATP as a cosubstrate. In Staphylococcus aureus (strain MSSA476), this protein is Shikimate kinase.